A 610-amino-acid polypeptide reads, in one-letter code: DNA mismatch repair protein MutL (610 aa).

This sequence belongs to the DNA mismatch repair MutL/HexB family.

Functionally, this protein is involved in the repair of mismatches in DNA. It is required for dam-dependent methyl-directed DNA mismatch repair. May act as a 'molecular matchmaker', a protein that promotes the formation of a stable complex between two or more DNA-binding proteins in an ATP-dependent manner without itself being part of a final effector complex. The sequence is that of DNA mismatch repair protein MutL from Rickettsia rickettsii (strain Sheila Smith).